A 116-amino-acid chain; its full sequence is MADEVKAVARFIRMSPFKVRRILDQIRGRSYQDALIILQFMPHAATEPIKKVLESAAANAEHNFSLDRRALVVSTAFADGGPVLKRFRAGDRGRARPVRKRTSHITVAVRSTSEVE.

This sequence belongs to the universal ribosomal protein uL22 family. In terms of assembly, part of the 50S ribosomal subunit.

In terms of biological role, this protein binds specifically to 23S rRNA; its binding is stimulated by other ribosomal proteins, e.g. L4, L17, and L20. It is important during the early stages of 50S assembly. It makes multiple contacts with different domains of the 23S rRNA in the assembled 50S subunit and ribosome. Its function is as follows. The globular domain of the protein is located near the polypeptide exit tunnel on the outside of the subunit, while an extended beta-hairpin is found that lines the wall of the exit tunnel in the center of the 70S ribosome. The protein is Large ribosomal subunit protein uL22 of Gloeobacter violaceus (strain ATCC 29082 / PCC 7421).